Reading from the N-terminus, the 289-residue chain is Nodulation protein NolT (289 aa).

The first 33 residues, 1 to 33 (MFGSAHGDTTSSDTSGRRPLRLVVLPLLLALSS), serve as a signal peptide directing secretion. Cys-34 is lipidated: N-palmitoyl cysteine. Cys-34 carries the S-diacylglycerol cysteine lipid modification. A helical membrane pass occupies residues 233 to 253 (VAVGVSAAVFAVTCYLLFIVL).

It belongs to the YscJ lipoprotein family.

The protein localises to the cell outer membrane. The polypeptide is Nodulation protein NolT (nolT) (Sinorhizobium fredii (strain NBRC 101917 / NGR234)).